Here is a 255-residue protein sequence, read N- to C-terminus: EEF1A lysine methyltransferase 4 (255 aa).

The S-adenosyl-L-methionine site is built by W26 and Y30. At Y39 the chain carries Phosphotyrosine. Residues W41, G66, 88–89, 113–114, and K130 contribute to the S-adenosyl-L-methionine site; these read DY and DV. The Required for methyltransferase activity motif lies at 129-134; that stretch reads EKGTLD.

It belongs to the methyltransferase superfamily.

The catalysed reaction is L-lysyl-[protein] + S-adenosyl-L-methionine = N(6)-methyl-L-lysyl-[protein] + S-adenosyl-L-homocysteine + H(+). The enzyme catalyses N(6)-methyl-L-lysyl-[protein] + S-adenosyl-L-methionine = N(6),N(6)-dimethyl-L-lysyl-[protein] + S-adenosyl-L-homocysteine + H(+). It catalyses the reaction N(6),N(6)-dimethyl-L-lysyl-[protein] + S-adenosyl-L-methionine = N(6),N(6),N(6)-trimethyl-L-lysyl-[protein] + S-adenosyl-L-homocysteine + H(+). Functionally, protein-lysine methyltransferase that efficiently catalyzes three successive methylations on 'Lys-36' in eukaryotic translation elongation factor 1 alpha (EEF1A1 or EEF1A2). In Homo sapiens (Human), this protein is EEF1A lysine methyltransferase 4.